The chain runs to 97 residues: uncharacterized protein (97 aa).

This is an uncharacterized protein from Methanothermococcus thermolithotrophicus (Methanococcus thermolithotrophicus).